The chain runs to 351 residues: MTVALGRVQERGWFDVLDDWLKRDRFVFIGWSGLLLFPCAFLSIGGWFTGTTFVTSWYTHGLASSYLEGCNFLTAAVSTPADSMGHSLLLLWGPEARGDFTRWCQLGGMWNFVTLHGAFGLIGFMLRQFEIARLVNVRPYNAVAFSGPIAVFVSVFLMYPLGQSSWFFAPSWGVASIFRFLLFVQGFHNLTLNPFHMMGVAGILGGALLCAIHGATVENTLFEDTKDANTFSGFSPTQSEETYSMVTANRFWSQIFGIAFSNKRWLHFFMLFVPVTGLWASAIGLVGIALNMRAYDFVSQEIRAAEDPEFETFYTKNILLNEGLRAWMAPQDQIHENFVFPEEVLPRGNAL.

The helical transmembrane segment at 39–59 (CAFLSIGGWFTGTTFVTSWYT) threads the bilayer. Histidine 116 serves as a coordination point for chlorophyll a. Residues 123-139 (GFMLRQFEIARLVNVRP) traverse the membrane as a helical segment. 2 residues coordinate pheophytin a: glutamine 128 and asparagine 141. A helical membrane pass occupies residues 151-164 (VFVSVFLMYPLGQS). Histidine 196 provides a ligand contact to chlorophyll a. A helical transmembrane segment spans residues 206–226 (GALLCAIHGATVENTLFEDTK). A plastoquinone is bound by residues histidine 213 and phenylalanine 260. Histidine 213 contacts Fe cation. Histidine 267 contributes to the Fe cation binding site. A helical membrane pass occupies residues 277-293 (GLWASAIGLVGIALNMR).

It belongs to the reaction center PufL/M/PsbA/D family. PSII is composed of 1 copy each of membrane proteins PsbA, PsbB, PsbC, PsbD, PsbE, PsbF, PsbH, PsbI, PsbJ, PsbK, PsbL, PsbM, PsbT, PsbX, PsbY, PsbZ, Psb30/Ycf12, peripheral proteins PsbO, CyanoQ (PsbQ), PsbU, PsbV and a large number of cofactors. It forms dimeric complexes. The D1/D2 heterodimer binds P680, chlorophylls that are the primary electron donor of PSII, and subsequent electron acceptors. It shares a non-heme iron and each subunit binds pheophytin, quinone, additional chlorophylls, carotenoids and lipids. There is also a Cl(-1) ion associated with D1 and D2, which is required for oxygen evolution. The PSII complex binds additional chlorophylls, carotenoids and specific lipids. is required as a cofactor.

The protein resides in the cellular thylakoid membrane. The enzyme catalyses 2 a plastoquinone + 4 hnu + 2 H2O = 2 a plastoquinol + O2. Photosystem II (PSII) is a light-driven water:plastoquinone oxidoreductase that uses light energy to abstract electrons from H(2)O, generating O(2) and a proton gradient subsequently used for ATP formation. It consists of a core antenna complex that captures photons, and an electron transfer chain that converts photonic excitation into a charge separation. The D1/D2 (PsbA/PsbD) reaction center heterodimer binds P680, the primary electron donor of PSII as well as several subsequent electron acceptors. D2 is needed for assembly of a stable PSII complex. In Acaryochloris marina (strain MBIC 11017), this protein is Photosystem II D2 protein 2.